A 315-amino-acid polypeptide reads, in one-letter code: Heterodimeric geranylgeranyl pyrophosphate synthase small subunit 1, chloroplastic (315 aa).

2 residues coordinate Mg(2+): Asp-124 and Gly-130. Positions 228, 265, and 280 each coordinate dimethylallyl diphosphate.

The protein belongs to the FPP/GGPP synthase family. In terms of assembly, part of a heterodimeric geranyl(geranyl)diphosphate synthase. Requires Mg(2+) as cofactor. In terms of tissue distribution, mainly expressed in trichomes, and, to a lower extent, in roots, leaves, flowers and stems.

It localises to the plastid. It is found in the chloroplast thylakoid membrane. The protein localises to the chloroplast. Its function is as follows. Heterodimeric geranyl(geranyl)-diphosphate (GPP) synthase small subunit. The small subunit alone is inactive in vitro while the large subunit GGPPS1 catalyzes mainly the production of geranygeranyl-diphosphate in vitro. Upon association of the two subunits, the product profile changes and the production of gerany-diphosphate is strongly increased. In Cannabis sativa (Hemp), this protein is Heterodimeric geranylgeranyl pyrophosphate synthase small subunit 1, chloroplastic.